Consider the following 235-residue polypeptide: Phosphoribosylaminoimidazole-succinocarboxamide synthase (235 aa).

This sequence belongs to the SAICAR synthetase family.

It carries out the reaction 5-amino-1-(5-phospho-D-ribosyl)imidazole-4-carboxylate + L-aspartate + ATP = (2S)-2-[5-amino-1-(5-phospho-beta-D-ribosyl)imidazole-4-carboxamido]succinate + ADP + phosphate + 2 H(+). Its pathway is purine metabolism; IMP biosynthesis via de novo pathway; 5-amino-1-(5-phospho-D-ribosyl)imidazole-4-carboxamide from 5-amino-1-(5-phospho-D-ribosyl)imidazole-4-carboxylate: step 1/2. The sequence is that of Phosphoribosylaminoimidazole-succinocarboxamide synthase from Chlorobium chlorochromatii (strain CaD3).